Here is a 243-residue protein sequence, read N- to C-terminus: MNRIKAVGYENNELKEKAQLLADQLNLQLDQNADTCLFVTPEKLTLKIRNFSLMFADFSAMTWSKRRGEGKRQGLIRACKPTKGIKILDATAGWGKDAAILATFGADVVMLERHPVMAALLADALSRRNEADIQKMCLSLIASDAISFLHSLQEKDYPDIIYIDPMHPERNKSALVKKEMQVLQQLIGTDHDAMELIELSLSHVKSRVVVKWPQKVKPLLPPDASIDGKTVRFDIYMAQFSSN.

Residues 112 to 113 and D164 contribute to the S-adenosyl-L-methionine site; that span reads ER.

Belongs to the methyltransferase superfamily. RsmJ family.

The protein resides in the cytoplasm. The catalysed reaction is guanosine(1516) in 16S rRNA + S-adenosyl-L-methionine = N(2)-methylguanosine(1516) in 16S rRNA + S-adenosyl-L-homocysteine + H(+). Functionally, specifically methylates the guanosine in position 1516 of 16S rRNA. The chain is Ribosomal RNA small subunit methyltransferase J from Legionella pneumophila subsp. pneumophila (strain Philadelphia 1 / ATCC 33152 / DSM 7513).